A 620-amino-acid chain; its full sequence is uncharacterized protein (620 aa).

A Radical SAM core domain is found at 324 to 586 (RRYVTIAIIK…HPWEKGIYPT (263 aa)). Positions 338, 342, and 345 each coordinate [4Fe-4S] cluster. Residue lysine 552 is modified to N6-(pyridoxal phosphate)lysine.

It belongs to the radical SAM superfamily. KamA family. It depends on [4Fe-4S] cluster as a cofactor. Pyridoxal 5'-phosphate serves as cofactor.

This is an uncharacterized protein from Methanocaldococcus jannaschii (strain ATCC 43067 / DSM 2661 / JAL-1 / JCM 10045 / NBRC 100440) (Methanococcus jannaschii).